The sequence spans 283 residues: D-alanine aminotransferase (283 aa).

Tyrosine 32 is a substrate binding site. Arginine 51 is a binding site for pyridoxal 5'-phosphate. Arginine 99 and histidine 101 together coordinate substrate. Lysine 146 serves as the catalytic Proton acceptor. The residue at position 146 (lysine 146) is an N6-(pyridoxal phosphate)lysine. Glutamate 178 serves as a coordination point for pyridoxal 5'-phosphate.

The protein belongs to the class-IV pyridoxal-phosphate-dependent aminotransferase family. As to quaternary structure, homodimer. It depends on pyridoxal 5'-phosphate as a cofactor.

It carries out the reaction D-alanine + 2-oxoglutarate = D-glutamate + pyruvate. Acts on the D-isomers of alanine, leucine, aspartate, glutamate, aminobutyrate, norvaline and asparagine. The enzyme transfers an amino group from a substrate D-amino acid to the pyridoxal phosphate cofactor to form pyridoxamine and an alpha-keto acid in the first half-reaction. The second half-reaction is the reverse of the first, transferring the amino group from the pyridoxamine to a second alpha-keto acid to form the product D-amino acid via a ping-pong mechanism. This is an important process in the formation of D-alanine and D-glutamate, which are essential bacterial cell wall components. The chain is D-alanine aminotransferase (dat) from Lysinibacillus sphaericus (Bacillus sphaericus).